The chain runs to 454 residues: MASSEVARHLLFQSHMATKTTCMSSQGSDDEQIKRENIRSLTMSGHVGFESLPDQLVNRSIQQGFCFNILCVGETGIGKSTLIDTLFNTNFEDYESSHFCPNVKLKAQTYELQESNVQLKLTIVNTVGFGDQINKEESYQPIVDYIDAQFEAYLQEELKIKRSLFTYHDSRIHVCLYFISPTGHSLKTLDLLTMKNLDSKVNIIPVIAKADTVSKTELQKFKIKLMSELVSNGVQIYQFPTDDDTIAKVNAAMNGQLPFAVVGSMDEVKVGNKMVKARQYPWGVVQVENENHCDFVKLREMLICTNMEDLREQTHTRHYELYRRCKLEEMGFTDVGPENKPVSVQETYEAKRHEFHGERQRKEEEMKQMFVQRVKEKEAILKEAERELQAKFEHLKRLHQEERMKLEEKRRLLEEEIIAFSKKKATSEIFHSQSFLATGSNLRKDKDRKNSNFL.

The 267-residue stretch at 63–329 (QGFCFNILCV…ELYRRCKLEE (267 aa)) folds into the Septin-type G domain. The tract at residues 73-80 (GETGIGKS) is G1 motif. Residues 73-80 (GETGIGKS), glycine 128, 209-217 (KADTVSKTE), glycine 263, and arginine 278 each bind GTP. Residues 125 to 128 (NTVG) are G3 motif. The segment at 208–211 (AKAD) is G4 motif.

Belongs to the TRAFAC class TrmE-Era-EngA-EngB-Septin-like GTPase superfamily. Septin GTPase family. As to quaternary structure, septins polymerize into heterooligomeric protein complexes that form filaments, and can associate with cellular membranes, actin filaments and microtubules. GTPase activity is required for filament formation. Interacts with ADGB. In terms of processing, proteolytically cleaved in vitro in a calmodulin-dependent manner. In terms of tissue distribution, widely expressed. Abundantly expressed in heart and kidney, placenta, skeletal muscles, liver and lung, as well as various tumor cell lines.

Its subcellular location is the cytoplasm. The protein localises to the cytoskeleton. The protein resides in the cell projection. It is found in the cilium. It localises to the flagellum. Its function is as follows. Filament-forming cytoskeletal GTPase. May play a role in cytokinesis (Potential). In Homo sapiens (Human), this protein is Septin-10.